Reading from the N-terminus, the 210-residue chain is Large ribosomal subunit protein uL4 (210 aa).

Over residues 47–64 (SRQGTRSQKSRSEVSGSN) the composition is skewed to polar residues. The disordered stretch occupies residues 47-83 (SRQGTRSQKSRSEVSGSNKKPWRQKGTGRARSGSVKS).

Belongs to the universal ribosomal protein uL4 family. In terms of assembly, part of the 50S ribosomal subunit.

One of the primary rRNA binding proteins, this protein initially binds near the 5'-end of the 23S rRNA. It is important during the early stages of 50S assembly. It makes multiple contacts with different domains of the 23S rRNA in the assembled 50S subunit and ribosome. In terms of biological role, forms part of the polypeptide exit tunnel. This Blochmanniella pennsylvanica (strain BPEN) protein is Large ribosomal subunit protein uL4.